A 107-amino-acid polypeptide reads, in one-letter code: Small ribosomal subunit protein uS15 (107 aa).

N6-acetyllysine; alternate is present on Lys-27. Lys-27 bears the N6-succinyllysine; alternate mark. A Glycyl lysine isopeptide (Lys-Gly) (interchain with G-Cter in ubiquitin) cross-link involves residue Lys-27. The residue at position 30 (Ser-30) is a Phosphoserine. Lys-34 carries the post-translational modification N6-succinyllysine. The residue at position 38 (Tyr-38) is a Phosphotyrosine. Lys-43 participates in a covalent cross-link: Glycyl lysine isopeptide (Lys-Gly) (interchain with G-Cter in SUMO2).

This sequence belongs to the universal ribosomal protein uS15 family. Component of the small ribosomal subunit. Part of the small subunit (SSU) processome, composed of more than 70 proteins and the RNA chaperone small nucleolar RNA (snoRNA) U3. Post-translationally, ubiquitinated at Lys-27 by RNF14 and RNF25 in response to ribosome collisions (ribosome stalling).

It localises to the cytoplasm. It is found in the nucleus. The protein resides in the nucleolus. Its function is as follows. Component of the small ribosomal subunit. The ribosome is a large ribonucleoprotein complex responsible for the synthesis of proteins in the cell. Part of the small subunit (SSU) processome, first precursor of the small eukaryotic ribosomal subunit. During the assembly of the SSU processome in the nucleolus, many ribosome biogenesis factors, an RNA chaperone and ribosomal proteins associate with the nascent pre-rRNA and work in concert to generate RNA folding, modifications, rearrangements and cleavage as well as targeted degradation of pre-ribosomal RNA by the RNA exosome. This chain is Small ribosomal subunit protein uS15 (RPS13), found in Sus scrofa (Pig).